A 106-amino-acid polypeptide reads, in one-letter code: MEKKHIYLFCSAGMSTSLLVSKMRAQAEKYEVPVIIEAFPETLAGEKGQNADVVLLGPQIAYMLPEIQRLLPNKPVEVIDSLLYGKVDGLGVLKAAVAAIKKAAAN.

Residues 3 to 106 (KKHIYLFCSA…VAAIKKAAAN (104 aa)) form the PTS EIIB type-3 domain. The active-site Phosphocysteine intermediate is cysteine 10. Residue cysteine 10 is modified to Phosphocysteine; by EIIA.

As to quaternary structure, forms a complex with ChbA (EIIA). ChbB is a monomer in both its unphosphorylated and phosphorylated forms.

The protein localises to the cytoplasm. It catalyses the reaction N,N'-diacetylchitobiose(out) + N(pros)-phospho-L-histidyl-[protein] = diacetylchitobiose-6'-phosphate(in) + L-histidyl-[protein]. Its function is as follows. The phosphoenolpyruvate-dependent sugar phosphotransferase system (sugar PTS), a major carbohydrate active transport system, catalyzes the phosphorylation of incoming sugar substrates concomitantly with their translocation across the cell membrane. The enzyme II ChbABC PTS system is involved in the transport of the chitin disaccharide N,N'-diacetylchitobiose (GlcNAc2). In Escherichia coli O157:H7, this protein is PTS system N,N'-diacetylchitobiose-specific EIIB component (chbB).